The chain runs to 430 residues: Maintenance of mitochondrial morphology protein 1 (430 aa).

The Lumenal portion of the chain corresponds to M1–G70. A helical membrane pass occupies residues L71–F91. The Cytoplasmic segment spans residues A92 to I430. The region spanning A159 to P387 is the SMP-LTD domain. The tract at residues G305–G326 is disordered. The span at S317–G326 shows a compositional bias: acidic residues.

The protein belongs to the MMM1 family. As to quaternary structure, homodimer. Component of the ER-mitochondria encounter structure (ERMES) or MDM complex, composed of MMM1, MDM10, MDM12 and MDM34. An MMM1 homodimer associates with one molecule of MDM12 on each side in a pairwise head-to-tail manner, and the SMP-LTD domains of MMM1 and MDM12 generate a continuous hydrophobic tunnel for phospholipid trafficking.

Its subcellular location is the endoplasmic reticulum membrane. In terms of biological role, component of the ERMES/MDM complex, which serves as a molecular tether to connect the endoplasmic reticulum (ER) and mitochondria. Components of this complex are involved in the control of mitochondrial shape and protein biogenesis, and function in nonvesicular lipid trafficking between the ER and mitochondria. The MDM12-MMM1 subcomplex functions in the major beta-barrel assembly pathway that is responsible for biogenesis of all outer membrane beta-barrel proteins, and acts in a late step after the SAM complex. The MDM10-MDM12-MMM1 subcomplex further acts in the TOM40-specific pathway after the action of the MDM12-MMM1 complex. Essential for establishing and maintaining the structure of mitochondria and maintenance of mtDNA nucleoids. The sequence is that of Maintenance of mitochondrial morphology protein 1 from Candida dubliniensis (strain CD36 / ATCC MYA-646 / CBS 7987 / NCPF 3949 / NRRL Y-17841) (Yeast).